A 303-amino-acid chain; its full sequence is MADTDCKWDPGADKYPLLGFGQAVIGPPGSGKSTYVRAMQALLAQMGRKSAIINLDPAGEDEPGAAVSLRELLGLEEVMSELRLGPNGALLYCMEYLQENLDWLRGRLQGLRGTYFLLDCPGQVELYTHHPALPDVLRRLGAWGLRLCAVHLVDSHYCTDPAKFISVLCTSLSTMLHVELPHINVLSKMDLIEQYGRLAFNLDYYTEVMDLSYLVEQLTSDPFFRRHKRLHEKLAEVIQDYGLVTFMPLSIKDEKSLRLVLSAVDKASGFCFGETKQSLGNLMSVAVGADFQFTSYPSHDCRG.

29 to 34 lines the GTP pocket; sequence GSGKST. The short motif at 85–87 is the Gly-Pro-Asn (GPN)-loop; involved in dimer interface element; sequence GPN. Position 187–190 (187–190) interacts with GTP; the sequence is SKMD.

The protein belongs to the GPN-loop GTPase family. Heterodimers with gpn1 or gpn3. Binds to RNA polymerase II (RNAPII).

Its function is as follows. Small GTPase required for proper localization of RNA polymerase II and III (RNAPII and RNAPIII). May act at an RNAP assembly step prior to nuclear import. This Xenopus tropicalis (Western clawed frog) protein is GPN-loop GTPase 2.